Here is an 81-residue protein sequence, read N- to C-terminus: Short neurotoxin 1 (81 aa).

The first 21 residues, 1–21 (MKTLLLTLVVVTIVCLDLGYT), serve as a signal peptide directing secretion. 4 disulfide bridges follow: Cys24/Cys43, Cys38/Cys60, Cys62/Cys73, and Cys74/Cys79.

The protein belongs to the three-finger toxin family. Short-chain subfamily. Type I alpha-neurotoxin sub-subfamily. Expressed by the venom gland.

The protein localises to the secreted. In terms of biological role, binds to muscle nicotinic acetylcholine receptor (nAChR) and inhibit acetylcholine from binding to the receptor, thereby impairing neuromuscular transmission. The polypeptide is Short neurotoxin 1 (Hoplocephalus stephensii (Stephens's banded snake)).